A 2325-amino-acid polypeptide reads, in one-letter code: MVPWRALSLPILLVSLRGYVCASSVLSETSESEFYENEQRRALLAVQFEATSPRYFFHEAINWGESKIKGSCPHECLNGAFCSKTGTCDCQIFQALGTRCQIVPNMGSGRDGICKTWGQYHFETFDGIYYYFPGSCSYIFAKDCGNLEPQYTVWVHNSPKCLGSVYSCYRSISLFFSNQEEIRIYGHEIRKNGISLSLPQTLGQVHLEKVADYILVKTTFGFSLAWDGISGIYLKLSEEHRGKSCGLCANYNGIQSDDFVILQEDYTEDIAMFANSWLVLTPDDTKCVPTPSDFPNPCSSGMPAFEAIFFKCQILLQFPFLSCHEYIDPYLYIASCVNDLCKTDDDETYCRAATEYARACSHAGFPIQDWRDDFPACTDKCDDSFVHRDCISCCPPSCTFEKQCLGSNLHCLDGCYCADGLIMDNGTCISLESCPCSFHGLAYSVGSKIEQECTECVCVGGVWNCTEHDCPVQCSVVGDSHFTTFDGRHYSFIGLCQYILVKGTGKDRFTITLQKAHCEQNLGLVCLQSITLILEDDFNKQVTLSRGGQIVTSPNQGFTLNGIVEIQTLSSLFILLRTTFGLKILFAIDGERIYIQLSSAWKRRTLGLCGTFNGNIRDDFLSPSGMIEGTPQLHAHAWRVSSTCFAPVHVPMVDPCNINQQNIGYAAHCDVIHQELFAPCHVYVSPGLYYQLCRHDACKCGSPCLCNALAHYAYLCGQRGVPIDFRAHISFCAVVCQKGMLYHHCSSLCLRSCTSLSSPEQCKDDCAEGCNCPEGKFYEETLNFCVPIYHCRCHYRGSIYQPGELIPTPSGLCQCSNGTVKCDELATPSTVHACPEGKEYFDCRFPDPALPAGGINCETTCANLAMNFTCAPSSPCISGCVCAAGMAEHKGKCYVPESCPCIWKDWEYSSGEVISTPCYTCVCRRGMFNCTYYPCPAVCTVYGDRHYHSFDGLEYDYISDCQVFLIKSTDDSDISVISQNKKCFDNDIVCSKSVLISIGDTEIYLNDAPYKQKRSGFFLESRPEYQLWKAGFYIVIYFPEEDITILWDEKTTIHIKVGPQWKNKLAGLCGNFDKCTSNDMTTSNNIEVRNAQVFGDSWALGQCEDLMEALKPCEAHQNKFPYAKRECSILYSDVFAPCRNVIDVTSFAKNCHEDTCNCNLGGDCECLCTSVAAYAYKCCQEGVPVHWRSPTVCALDCEYYNQGLGEGPYMLASYGQSGLVLGANMTSRSVFSLPRSNNRGNLFFIFMITPGLFKEKTSSLALVSLESAERPNYFLYVHDNDTLSLKLWRANSEFHQRATFFHHQGLWIPGYSAFELYSKKGYFIVFMGSSVKASKYDDSEEFKQSSSFSIEEIQAVVPYRRMCEWRYEPCATPCFKTCSDPEALACTFLPPVEGCLPYCPKNMILDETTLKCVHPEDCIPLFPTEPALPPDITPSDMTPTPGLECEPQQFDPVYNCSQYICLNMEWTFYNWSLNCPKDLEMPDCGFRGWPVQVNTDICCPEWECPCRCSMLSELSIITFDGNSAALSSMASYILVRVPGEIVVVHIDKCSMNQNGHALKKPASFGRISGLCFKKLNVTTSIHKILINRVVRKVDVDSIVVPLPFSSHELFIEDSGTMYVITTPAGLIIKWAHLTGIIDIHFGPQFNLSSYTEGLCGICNDNPDDDLRMQNGTIITNMEDIELFIGSWEIEKSFEVTMRRPVRNCTEYDCSHCIELLNREGFIPCHDKVSPRDFCEKMWINYTYFWSYECDAISAYVALCNKFDICIQWRTPDYCPLSCPEGKEYQPCVRPCEARTCLNKWFYGHSSCLNLREDCVCKNGTILHRPDKTLCIPEQECVCTDREEHPRSAGEIWNGGIDECTLYKCLEDGNIIPIEPVCEEEPSPICERTAEVVIGIVDKLTCCSKKVCGCDMSLCDRTIPPCTNSQKLIVGYSALSCCPQYECECDTVRCPDISTPVCRDDQFVLQVRQGEPCCFYPSCVCKTCTEPTPQCTDGEFLTVNINTTHLCCPQYYCVCEPDLCPPPSLECAKDMNLVKENVSGQCCPNWRCECNCETLVMPTCDVGEFAAIDQNFQTDCGCVQYLCEKDDVCVFQEVSVLNPGQSLIKYLEEEFCYIIECLDEKDNYTDFHTLNVTMVNCSKDCDAHQIYIPSSSDYDCCGTCKNISCKFIMENGTSVIYEEGSTWHYNCSTYECVNTEEGATILNYSMVCPPFNETECKLNEGIVKLYNEGCCKICKREERICQKVIIKSIIKKQDCVSQSSISVASCDGKCPSATIYNINVESHLRFCKCCRENGVRNVTVPLHCSGNGTEVMYTLQEPIDCTCQWN.

The first 22 residues, 1–22, serve as a signal peptide directing secretion; sequence MVPWRALSLPILLVSLRGYVCA. The 177-residue stretch at 112–288 folds into the VWFD 1 domain; sequence GICKTWGQYH…VLTPDDTKCV (177 aa). Disulfide bonds link C114/C248 and C136/C287. A glycan (N-linked (GlcNAc...) asparagine) is linked at N425. A VWFD 2 domain is found at 472-645; sequence VQCSVVGDSH…HAWRVSSTCF (174 aa). Intrachain disulfides connect C474/C609, C496/C644, and C518/C526. The TIL 1 domain occupies 736–791; the sequence is CQKGMLYHHCSSLCLRSCTSLSSPEQCKDDCAEGCNCPEGKFYEETLNFCVPIYHC. N817 and N867 each carry an N-linked (GlcNAc...) asparagine glycan. Residues 937-1114 enclose the VWFD 3 domain; the sequence is AVCTVYGDRH…DLMEALKPCE (178 aa). Intrachain disulfides connect C939-C1069, C961-C1113, and C983-C990. N1280 is a glycosylation site (N-linked (GlcNAc...) asparagine). One can recognise a TIL 2 domain in the interval 1366 to 1418; that stretch reads RYEPCATPCFKTCSDPEALACTFLPPVEGCLPYCPKNMILDETTLKCVHPEDC. Residues 1506–1695 form the VWFD 4 domain; that stretch reads CRCSMLSELS…SWEIEKSFEV (190 aa). 2 cysteine pairs are disulfide-bonded: C1508–C1655 and C1549–C1571. N-linked (GlcNAc...) asparagine glycans are attached at residues N1576 and N2170. 4 cysteine pairs are disulfide-bonded: C2233–C2289, C2254–C2303, C2265–C2320, and C2269–C2322. The region spanning 2233–2325 is the CTCK domain; that stretch reads CKREERICQK…EPIDCTCQWN (93 aa). Residue N2296 is glycosylated (N-linked (GlcNAc...) asparagine).

Belongs to the otogelin family.

It localises to the secreted. The protein is Otogelin-like protein (Otogl) of Mus musculus (Mouse).